Reading from the N-terminus, the 102-residue chain is Integration host factor subunit beta (102 aa).

It belongs to the bacterial histone-like protein family. As to quaternary structure, heterodimer of an alpha and a beta chain.

In terms of biological role, this protein is one of the two subunits of integration host factor, a specific DNA-binding protein that functions in genetic recombination as well as in transcriptional and translational control. This chain is Integration host factor subunit beta, found in Rhodopseudomonas palustris (strain BisA53).